The primary structure comprises 424 residues: Tyrosine--tRNA ligase (424 aa).

Tyr-37 lines the L-tyrosine pocket. The 'HIGH' region motif lies at Pro-42–His-51. Positions 175 and 179 each coordinate L-tyrosine. A 'KMSKS' region motif is present at residues Lys-235 to Thr-239. Residue Lys-238 coordinates ATP. The 58-residue stretch at Ala-357–Gly-414 folds into the S4 RNA-binding domain.

This sequence belongs to the class-I aminoacyl-tRNA synthetase family. TyrS type 1 subfamily. In terms of assembly, homodimer.

It is found in the cytoplasm. The enzyme catalyses tRNA(Tyr) + L-tyrosine + ATP = L-tyrosyl-tRNA(Tyr) + AMP + diphosphate + H(+). Catalyzes the attachment of tyrosine to tRNA(Tyr) in a two-step reaction: tyrosine is first activated by ATP to form Tyr-AMP and then transferred to the acceptor end of tRNA(Tyr). This Salmonella enteritidis PT4 (strain P125109) protein is Tyrosine--tRNA ligase.